The following is a 1039-amino-acid chain: MKKVEPVNFRELDKKIKKFWEENDIYQKVKKKNERNKEFYFVDGPPYCSGAIHLGTAWNKIIKDTYLRFKRMQGYNVLDKAGWDMHGLPIEVKVENEFGIKNKKEIETKIGVKQFIEKCKEFALKHKEIMEKQFKNLGVWLDWENAYMPITKEYMEIGWWTLKVAHEKGLLTRDLRVVYWCPRCETALAEHEVRGEYKEVYDPSVYVKFRLANEENTYIVIWTTTPWTLVANLAVTVHPDYDYAYVEVEFDDKKEVWIIAEKLVEEVINKAKKFHNIKNYKIIKKVKGKELEGIKYIHPLLEENERQKEFAELENAHTVILGEHVTLEGGTGLVHTAPGHGEEDFEVGKKYNLPIYSPIDDEGKYVEGKWKGVFVKDADAEIIETLKNKGLLVYAGKIKHSYPHCWRCKTPLLFRATEQWFLEISKIKDNIIEHAKTVQWIPHWVETRYINGVKFVGDWNISRQRYWGIPIPVWVCEKCGKYIVVGSVEELEEKMINKDEVGEINDLHKPTVDKIKLRCECGGEMKRVPDVLDVWFDSGLAPYASIGVKELKKADFITEGHDQVTKWFYSQHALSAIVFNDIPYKKCLMHGFTLDEHGDKMSKSLGNVVNPDDVVEKYGADLLRFYLLSANKVWEDLRFVWSEMDDVLSLFNTLWNAYMFAVNYMVLDNFKPDEKYFEYLKDEDRWIVSRINSVAKIAIENLEVPYFHTYTWTLKDFILNDLSRWYIRLIRDRTWKEKDDADKLAAYQTLYYVLLKLATILAPVAPHTAEAIYQNLKTEDMEESIFMNKIEVDEEFIDEELERDMAIVRDVVDAIYRGRDRIKYTLRYPLKEITIAGGEEVKKAVERFEYIIKEQGNVKNIKFGEVEGSKYIIKPNYRELGKRYRSEVPKVVEALNKADAKELMERLKEGAVILDGYEIKPEYVEIRLEIPEHIAGVEFSKGTVFINTEITDDLIKEGLMREVIRRIQAMRKDMDLDIEEKIKIKVEGIDLDEFKEIIEREVRGQFVDEIKADYEKDWEIKTPNGEKYNVKIAIERINK.

Positions 46–56 match the 'HIGH' region motif; the sequence is PYCSGAIHLGT. Residues 600–604 carry the 'KMSKS' region motif; the sequence is KMSKS. K603 is a binding site for ATP.

Belongs to the class-I aminoacyl-tRNA synthetase family. IleS type 2 subfamily. As to quaternary structure, monomer. It depends on Zn(2+) as a cofactor.

The protein resides in the cytoplasm. It catalyses the reaction tRNA(Ile) + L-isoleucine + ATP = L-isoleucyl-tRNA(Ile) + AMP + diphosphate. Its function is as follows. Catalyzes the attachment of isoleucine to tRNA(Ile). As IleRS can inadvertently accommodate and process structurally similar amino acids such as valine, to avoid such errors it has two additional distinct tRNA(Ile)-dependent editing activities. One activity is designated as 'pretransfer' editing and involves the hydrolysis of activated Val-AMP. The other activity is designated 'posttransfer' editing and involves deacylation of mischarged Val-tRNA(Ile). This is Isoleucine--tRNA ligase from Methanocaldococcus jannaschii (strain ATCC 43067 / DSM 2661 / JAL-1 / JCM 10045 / NBRC 100440) (Methanococcus jannaschii).